A 330-amino-acid chain; its full sequence is Tyrosine-protein phosphatase yvh1 (330 aa).

In terms of domain architecture, Tyrosine-protein phosphatase spans 45–187; the sequence is NDLSEISKNL…LRVYFECNYQ (143 aa). Residue Cys-131 is the Phosphocysteine intermediate of the active site.

It belongs to the protein-tyrosine phosphatase family. Non-receptor class dual specificity subfamily.

The protein resides in the cytoplasm. It is found in the nucleus. The enzyme catalyses O-phospho-L-tyrosyl-[protein] + H2O = L-tyrosyl-[protein] + phosphate. In terms of biological role, may be directly involved in signal transduction and/or cell cycle regulation. It is necessary for maintaining growth rate or spore germination. Could show both activity toward tyrosine-protein phosphate as well as with serine-protein phosphate. In Schizosaccharomyces pombe (strain 972 / ATCC 24843) (Fission yeast), this protein is Tyrosine-protein phosphatase yvh1 (yvh1).